We begin with the raw amino-acid sequence, 168 residues long: 2-C-methyl-D-erythritol 2,4-cyclodiphosphate synthase (168 aa).

2 residues coordinate a divalent metal cation: Asp15 and His17. Residues 15-17 and 45-46 contribute to the 4-CDP-2-C-methyl-D-erythritol 2-phosphate site; these read DVH and HS. Residue His53 coordinates a divalent metal cation. 4-CDP-2-C-methyl-D-erythritol 2-phosphate-binding positions include 72 to 76, Phe150, and Arg153; that span reads FPNSD.

It belongs to the IspF family. Homotrimer. Requires a divalent metal cation as cofactor.

It carries out the reaction 4-CDP-2-C-methyl-D-erythritol 2-phosphate = 2-C-methyl-D-erythritol 2,4-cyclic diphosphate + CMP. It functions in the pathway isoprenoid biosynthesis; isopentenyl diphosphate biosynthesis via DXP pathway; isopentenyl diphosphate from 1-deoxy-D-xylulose 5-phosphate: step 4/6. Functionally, involved in the biosynthesis of isopentenyl diphosphate (IPP) and dimethylallyl diphosphate (DMAPP), two major building blocks of isoprenoid compounds. Catalyzes the conversion of 4-diphosphocytidyl-2-C-methyl-D-erythritol 2-phosphate (CDP-ME2P) to 2-C-methyl-D-erythritol 2,4-cyclodiphosphate (ME-CPP) with a corresponding release of cytidine 5-monophosphate (CMP). The polypeptide is 2-C-methyl-D-erythritol 2,4-cyclodiphosphate synthase (Anaplasma phagocytophilum (strain HZ)).